The chain runs to 529 residues: UDP-glucuronosyltransferase 2B33 (529 aa).

An N-terminal signal peptide occupies residues 1–24; the sequence is MSVKWTSIILLIQLSFYFSSGSCG. 2 N-linked (GlcNAc...) asparagine glycosylation sites follow: Asn67 and Asn68. A helical membrane pass occupies residues 494 to 514; that stretch reads IGFLLACVATVIFIIMKCCLF.

The protein belongs to the UDP-glycosyltransferase family.

It localises to the microsome membrane. Its subcellular location is the endoplasmic reticulum membrane. It catalyses the reaction glucuronate acceptor + UDP-alpha-D-glucuronate = acceptor beta-D-glucuronoside + UDP + H(+). Functionally, UDPGTs are of major importance in the conjugation and subsequent elimination of potentially toxic xenobiotics and endogenous compounds. This isozyme has glucuronidating capacity on estriol and does not catalyze the glucuronidation of beta-estradiol. Capable of conjugating 4-hydroxyestrone, androsterone, diclofenac, and hyodeoxycholic acid. This chain is UDP-glucuronosyltransferase 2B33 (UGT2B33), found in Macaca mulatta (Rhesus macaque).